The following is a 641-amino-acid chain: Lipase (641 aa).

The first 38 residues, 1–38 (MKETKHQHTFSIRKSAYGAASVMVASCIFVIGGGVAEA), serve as a signal peptide directing secretion. Disordered regions lie at residues 41–174 (STTQ…PSVD) and 206–246 (TVSP…KPTV). The segment covering 53-64 (QTSQQETHTHQT) has biased composition (low complexity). The span at 73–94 (TPEHVDDSKEATPLPEKAESPK) shows a compositional bias: basic and acidic residues. 2 stretches are compositionally biased toward polar residues: residues 95–106 (TEVTVQPSSHTQ) and 127–139 (PEST…VESN). The span at 140-165 (KATENEMSPVEHHASNVEKREDRLET) shows a compositional bias: basic and acidic residues. Polar residues predominate over residues 227-239 (ENTTAQNKFTSQA). Serine 369 serves as the catalytic Nucleophile. Glycine 535 contributes to the Ca(2+) binding site. Residue aspartate 559 is the Charge relay system of the active site. Aspartate 599 provides a ligand contact to Ca(2+). Histidine 600 serves as the catalytic Charge relay system. Residues aspartate 602, aspartate 607, and aspartate 610 each coordinate Ca(2+).

It belongs to the AB hydrolase superfamily. Lipase family. Ca(2+) serves as cofactor.

The protein localises to the secreted. The enzyme catalyses a triacylglycerol + H2O = a diacylglycerol + a fatty acid + H(+). It carries out the reaction a 1,2-diacyl-sn-glycero-3-phosphocholine + H2O = a 2-acyl-sn-glycero-3-phosphocholine + a fatty acid + H(+). Its function is as follows. Has a broad substrate specificity hydrolyzing a variety of triglycerides and phosphatidylcholines. The chain is Lipase (lip) from Staphylococcus hyicus.